Reading from the N-terminus, the 240-residue chain is DNA repair protein RecO (240 aa).

The protein belongs to the RecO family.

In terms of biological role, involved in DNA repair and RecF pathway recombination. This Actinobacillus pleuropneumoniae serotype 3 (strain JL03) protein is DNA repair protein RecO.